The following is a 133-amino-acid chain: MALHNLQPAPGSTHKTKRVGRGQGSGMGKTATRGQKGQKSRTGYSQKRGFEGGQQPLQRRLPKIGFTSNVVKPHAINVDKVKKVAQLEEITMETIRSVYKLPKYVTRVKLIGSSVQEIVSKIKDDNISYSGQK.

The interval 1–62 is disordered; sequence MALHNLQPAP…GQQPLQRRLP (62 aa). The segment covering 32 to 45 has biased composition (polar residues); it reads TRGQKGQKSRTGYS.

The protein belongs to the universal ribosomal protein uL15 family. Part of the 50S ribosomal subunit.

Functionally, binds to the 23S rRNA. The protein is Large ribosomal subunit protein uL15 of Nitratiruptor sp. (strain SB155-2).